A 204-amino-acid polypeptide reads, in one-letter code: Leucyl/phenylalanyl-tRNA--protein transferase (204 aa).

This sequence belongs to the L/F-transferase family.

Its subcellular location is the cytoplasm. The catalysed reaction is N-terminal L-lysyl-[protein] + L-leucyl-tRNA(Leu) = N-terminal L-leucyl-L-lysyl-[protein] + tRNA(Leu) + H(+). It carries out the reaction N-terminal L-arginyl-[protein] + L-leucyl-tRNA(Leu) = N-terminal L-leucyl-L-arginyl-[protein] + tRNA(Leu) + H(+). The enzyme catalyses L-phenylalanyl-tRNA(Phe) + an N-terminal L-alpha-aminoacyl-[protein] = an N-terminal L-phenylalanyl-L-alpha-aminoacyl-[protein] + tRNA(Phe). Its function is as follows. Functions in the N-end rule pathway of protein degradation where it conjugates Leu, Phe and, less efficiently, Met from aminoacyl-tRNAs to the N-termini of proteins containing an N-terminal arginine or lysine. The sequence is that of Leucyl/phenylalanyl-tRNA--protein transferase from Sinorhizobium fredii (strain NBRC 101917 / NGR234).